Reading from the N-terminus, the 161-residue chain is Anaerobic nitrite reductase Glb1-2 (161 aa).

A Globin domain is found at 9–158; it reads AFTEEQEALV…LASAIIAEMK (150 aa). The short motif at 42–46 is the Homodimerization element; the sequence is EIAPP. Heme b-binding residues include Ser52, Lys66, His70, Lys100, Thr104, and His105. A Homodimerization motif is present at residues 112 to 124; the sequence is PEHFEVTKQALLD.

Belongs to the plant globin family. In terms of assembly, homodimer. Heme b serves as cofactor. As to expression, mainly expressed in root nodules and leaves, and, to a lower extent, in roots, stems, flowers and fruits. Accumulates in mature root nodules.

It carries out the reaction Fe(III)-heme b-[protein] + nitric oxide + H2O = Fe(II)-heme b-[protein] + nitrite + 2 H(+). Functionally, phytoglobin that reduces nitrite to nitric oxide (NO) under anoxic conditions (e.g. during flooding or in waterlogged soil) and upon root nodulation. Required for general plant development and during nodulation, especially for the onset of symbiosis. Monitors nitric oxide (NO) levels during early phase of the nitrogen-fixing symbiosis and buffers oxygen in functioning nodules. Necessary for the production of pods. May not function as an oxygen storage or transport protein. Has an unusually high affinity for O(2) through a hexacoordinate heme iron because of a very low dissociation constant. The protein is Anaerobic nitrite reductase Glb1-2 of Lotus japonicus (Lotus corniculatus var. japonicus).